Reading from the N-terminus, the 426-residue chain is Target of rapamycin complex 2 subunit AVO2 (426 aa).

5 ANK repeats span residues E4–T33, N39–E68, K74–H104, N108–V137, and N141–D171. The segment at S259 to R302 is disordered. A compositionally biased stretch (polar residues) spans T260–V278. Positions T285–R302 are enriched in low complexity. S315 and S350 each carry phosphoserine. The segment covering S350–Q359 has biased composition (polar residues). Residues S350–K392 are disordered. Residues D366–A375 are compositionally biased toward gly residues. The segment covering L381–K392 has biased composition (basic and acidic residues).

The target of rapamycin complex 2 (TORC2) is composed of at least AVO1, AVO2, BIT61, LST8, TOR2 and TSC11. TORC2 forms a homodimer. Contrary to TORC1, TORC2 does not bind to and is not sensitive to FKBP-rapamycin. AVO2 is peripherally associated to AVO1 and TSC11.

It is found in the cell membrane. Its subcellular location is the vacuole membrane. In terms of biological role, component of TORC2, which regulates cell cycle-dependent polarization of the actin-cytoskeleton and cell wall integrity. TORC2 controls polarity of the actin cytoskeleton, which is required for orienting the secretory pathway toward discrete growth sites, via the RHO1/PKC1/MAPK cell integrity pathway. In Saccharomyces cerevisiae (strain ATCC 204508 / S288c) (Baker's yeast), this protein is Target of rapamycin complex 2 subunit AVO2 (AVO2).